The following is a 94-amino-acid chain: Alpha-elapitoxin-Nss2a (94 aa).

Residues 1 to 21 (MKTLLLTLVVVTIVCLDLGDS) form the signal peptide. 5 disulfides stabilise this stretch: cysteine 24/cysteine 41, cysteine 34/cysteine 62, cysteine 47/cysteine 51, cysteine 66/cysteine 77, and cysteine 78/cysteine 83.

Belongs to the three-finger toxin family. Long-chain subfamily. Type II alpha-neurotoxin sub-subfamily. Expressed by the venom gland.

It is found in the secreted. Its function is as follows. Binds with high affinity to muscular (alpha-1/CHRNA1) and neuronal (alpha-7/CHRNA7) nicotinic acetylcholine receptor (nAChR) and inhibits acetylcholine from binding to the receptor, thereby impairing neuromuscular and neuronal transmission. In Notechis scutatus scutatus (Mainland tiger snake), this protein is Alpha-elapitoxin-Nss2a.